A 62-amino-acid chain; its full sequence is Phyllokinin-1 (62 aa).

Residues Met-1 to Ser-19 form the signal peptide. The propeptide occupies Ser-20–Glu-48. Residues Cys-22 to Tyr-62 form a disordered region. The segment covering Glu-30–Ser-42 has biased composition (acidic residues). Positions Glu-43–Arg-52 are enriched in basic and acidic residues. Position 62 is a sulfotyrosine; partial (Tyr-62).

Belongs to the frog skin active peptide (FSAP) family. Bradykinin-related peptide subfamily. In terms of processing, asp,Pro,Glu-[Thr6,Val10]-phyllokinin and [Thr6,Val10]-phyllokinin occur in sulfated and nonsulfated forms. [Thr6]-bradykinin and Des-Arg-[Thr6]-bradykinin are nonsulfated. As to expression, expressed by the skin glands.

The protein resides in the secreted. Inhibits ACE with a Ki of 1.6 uM, and targets B2 bradykinin receptor (BDKRB2). Provokes contraction of smooth muscle preparation (ileum). In vivo, induces an early hyperalgesic effects in living rats after intraplantar injection. The sequence is that of Phyllokinin-1 from Pithecopus azureus (Orange-legged monkey tree frog).